The primary structure comprises 448 residues: Putative diacyglycerol O-acyltransferase MT3848 (448 aa).

Residue His136 is the Proton acceptor of the active site.

Belongs to the long-chain O-acyltransferase family.

The catalysed reaction is an acyl-CoA + a 1,2-diacyl-sn-glycerol = a triacyl-sn-glycerol + CoA. It participates in glycerolipid metabolism; triacylglycerol biosynthesis. This is Putative diacyglycerol O-acyltransferase MT3848 from Mycobacterium tuberculosis (strain CDC 1551 / Oshkosh).